A 572-amino-acid polypeptide reads, in one-letter code: E3 SUMO-protein ligase PIAS2 (572 aa).

The region spanning 11-45 (VSSFRVSELQVLLGFAGRNKSGRKHDLLMRALHLL) is the SAP domain. Residues 19–23 (LQVLL) carry the LXXLL motif motif. Residues lysine 46 and lysine 249 each participate in a glycyl lysine isopeptide (Lys-Gly) (interchain with G-Cter in SUMO2) cross-link. The 166-residue stretch at 134–299 (QPSPPIPPVH…SMSVYLVRQL (166 aa)) folds into the PINIT domain. The SP-RING-type zinc-finger motif lies at 331–412 (PDSEIATTSL…FMEILNDCSD (82 aa)). Residues cysteine 362, histidine 364, cysteine 385, and cysteine 388 each coordinate Zn(2+). Residues lysine 430, lysine 435, lysine 443, and lysine 452 each participate in a glycyl lysine isopeptide (Lys-Gly) (interchain with G-Cter in SUMO2) cross-link. The SUMO1-binding stretch occupies residues 467–473 (IDVIDLT). Phosphoserine occurs at positions 476, 477, and 478. Residues 484 to 492 (PPAKRKCIF) carry the Nuclear localization signal motif. Lysine 489 participates in a covalent cross-link: Glycyl lysine isopeptide (Lys-Gly) (interchain with G-Cter in SUMO2). Serine 499 is subject to Phosphoserine. A Glycyl lysine isopeptide (Lys-Gly) (interchain with G-Cter in SUMO2) cross-link involves residue lysine 502. Positions 523–572 (AAIPPSLTDYSVPFHHTPVSSMSSDLPGEQRRNDINNEVQLGTSSDTVQQ) are disordered. Residues 558–572 (NNEVQLGTSSDTVQQ) show a composition bias toward polar residues.

This sequence belongs to the PIAS family. In terms of assembly, binds SUMO1 and UBE2I. Interacts with AXIN1, JUN, MDM2, PARK7, TP53 and TP73 isoform alpha, but not TP73 isoform beta. Interacts with STAT4 following IL12 and IFN-alpha stimulation of T-cells. Interacts also with GTF2I, GTF2IRD1, IKFZ1, DAB2 and MSX2, as well as with several steroid receptors, including ESR1, ESR2, NR3C1, PGR, AR, and with NCOA2. Sumoylation of a target protein seems to enhance the interaction. Binds to sumoylated ELK1. Binds DNA, such as CDKN1A promoter, in a sequence-specific manner. Interacts with PLAG1. Interacts with KLF8; the interaction results in SUMO ligation and repression of KLF8 transcriptional activity and of its cell cycle progression into G(1) phase. Interacts with IFIH1/MDA5. Interacts with PML. Interacts with PRDM1. Post-translationally, sumoylated. Mainly expressed in testis.

It is found in the nucleus speckle. The protein localises to the nucleus. It localises to the PML body. It functions in the pathway protein modification; protein sumoylation. In terms of biological role, functions as an E3-type small ubiquitin-like modifier (SUMO) ligase, stabilizing the interaction between UBE2I and the substrate, and as a SUMO-tethering factor. Plays a crucial role as a transcriptional coregulation in various cellular pathways, including the STAT pathway, the p53 pathway and the steroid hormone signaling pathway. The effects of this transcriptional coregulation, transactivation or silencing may vary depending upon the biological context and PIAS2 isoform studied. However, it seems to be mostly involved in gene silencing. Binds to sumoylated ELK1 and enhances its transcriptional activity by preventing recruitment of HDAC2 by ELK1, thus reversing SUMO-mediated repression of ELK1 transactivation activity. Sumoylates PML at'Lys-65' and 'Lys-160'. The sequence is that of E3 SUMO-protein ligase PIAS2 (Pias2) from Rattus norvegicus (Rat).